We begin with the raw amino-acid sequence, 984 residues long: MAIKNTLTGSGLLVLLTLACGTTVQSSPPTPAPRMYPNMNERPLSAESRLTPGTYRSELHIDLKSPQKTASQSSLAPTGDNNSKVESIIAGSDTTPRSAEGTSESPPVPQLGTPPRPAPRRSKGEGERQPPTAAPRTSRSVDTGSGSDASTEQQAGGQKVVTPIPASKGIYPSLDELRRSQESNVDAGSGTSTNEGGGTSEGPQVPQSGIPPRTGRRRAKARNRKRHPTPASRESSSEDENQPPTTASRPSNGEGESQPPTAAPRTSRSVDTGSGSDASTEQQAGGQKVVTPIPASKGIYPNLDELRQTQEGEESAPQPADVTWFSMSVPMGVVDRRVSRALKEQFFQFLQHLSADYPKQVQTVYEFLGWVADKLPENEEEVQMFIDALNTTEAMVGKAARWIFKAIPERERETIYSSFYQMFRDKLPKKFFETAEGMNPDVGQYFSAEEPVAVTPEIPAKSEEDSEAAETPTPLRRQANVAAQVLHPLPAKGVTRREWIPWPKMQNAISKAHGPLTRVPEWTPVTGSCALGDGYTDIDVTKATTDVLFRITLLILQQIRRKKTERGKLEDDQALVALCSAAGAFVDAWQHQQQALILEDPGTPKAHAQLIERLRNAGKYFMKSYDETTGESDHQQWKKNKAEVSKLGKSALMKSCVKYIKASGDVATRPFDSGTAKYPSRSLYGGIANTLETPFADSEAVAKAVHDYAKEHKKPEKLVGLCGALQISGYFKKCFSDAGRLSSVSFFHQHVDGASVLVRTLARERPIGRHALSQAICDPNISAQYFEGAFRLFSSTVSQEWEKENLFAQLASWTGKEMVLAPSLEEQAAVPPAQPAYETVYGDEEDRIYRIHVSGRHSSPQEVLYVGGIPSTVKPQQVHVLGPTVSDESRRMIHPVRHRSRTAPSSEAASTAAESSDEDPLPAENATAFLGVTPQEEESDAYKHTLDFDAVSPRKNKNKENRISAPLKQSDTLIEESTSKTSEL.

The signal sequence occupies residues 1–26 (MAIKNTLTGSGLLVLLTLACGTTVQS). Residues 24–300 (VQSSPPTPAP…TPIPASKGIY (277 aa)) form a disordered region. Composition is skewed to polar residues over residues 66–85 (PQKT…NSKV) and 92–105 (SDTT…TSES). N-linked (GlcNAc...) asparagine glycosylation is present at Asn-81. Positions 106-117 (PPVPQLGTPPRP) are enriched in pro residues. The stretch at 129-172 (QPPTAAPRTSRSVDTGSGSDASTEQQAGGQKVVTPIPASKGIYP) is repeat 1. Over residues 135 to 156 (PRTSRSVDTGSGSDASTEQQAG) the composition is skewed to polar residues. Positions 214 to 228 (TGRRRAKARNRKRHP) are enriched in basic residues. Over residues 242-285 (QPPTTASRPSNGEGESQPPTAAPRTSRSVDTGSGSDASTEQQAG) the composition is skewed to polar residues. The stretch at 258–301 (QPPTAAPRTSRSVDTGSGSDASTEQQAGGQKVVTPIPASKGIYP) is repeat 2. 2 N-linked (GlcNAc...) asparagine glycosylation sites follow: Asn-390 and Asn-780. The tract at residues 882–984 (GPTVSDESRR…EESTSKTSEL (103 aa)) is disordered. A compositionally biased stretch (basic residues) spans 892 to 901 (MIHPVRHRSR). A compositionally biased stretch (low complexity) spans 902 to 914 (TAPSSEAASTAAE). Asn-925 carries an N-linked (GlcNAc...) asparagine glycan. Over residues 967-984 (LKQSDTLIEESTSKTSEL) the composition is skewed to polar residues.

The protein localises to the secreted. The protein resides in the parasitophorous vacuole membrane. This Toxoplasma gondii protein is Rhoptry neck protein 4 (RON4).